A 2705-amino-acid polypeptide reads, in one-letter code: Teneurin-1 (2705 aa).

2 disordered regions span residues 1 to 73 and 135 to 222; these read MEQM…STQD and CLSS…TQDS. The Teneurin N-terminal domain occupies 1 to 299; it reads MEQMDCKPYQ…KPYRCCNWKC (299 aa). At 1 to 305 the chain is on the cytoplasmic side; the sequence is MEQMDCKPYQ…NWKCTALSAT (305 aa). Over residues 32 to 46 the composition is skewed to basic and acidic residues; sequence DGRKQRQSYDSRETL. The Nuclear localization signal (NLS) motif lies at 62–65; the sequence is RKRK. Positions 135-147 are enriched in polar residues; sequence CLSSRANSALSLT. The span at 148 to 157 shows a compositional bias: basic and acidic residues; sequence DTDHERKSDG. Over residues 173–182 the composition is skewed to pro residues; the sequence is PLPPPPPPPH. The short motif at 271–278 is the Required for interaction with SORBS1 (Ten-1 ICD form) element; the sequence is PPPRPLPR. The helical transmembrane segment at 306 to 326 threads the bilayer; it reads AITVTLALLLAYVIAVHLFGL. Residues 327-2705 lie on the Extracellular side of the membrane; that stretch reads TWQLQPVEGQ…FMRQSEIGRR (2379 aa). N414 is a glycosylation site (N-linked (GlcNAc...) asparagine). EGF-like domains are found at residues 509–540, 541–572, 573–605, 606–638, 639–672, 673–702, 703–734, and 735–769; these read VLDD…PDCA, KDSC…ECDV, PEEQ…EICE, EEDC…NCET, SLPI…SDCS, TELC…GPTC, EERT…DHCT, and IDGC…SGCN. 22 cysteine pairs are disulfide-bonded: C513–C523, C517–C528, C530–C539, C548–C559, C561–C570, C577–C588, C582–C593, C595–C604, C609–C620, C614–C625, C627–C636, C647–C660, C662–C671, C676–C686, C680–C691, C693–C702, C707–C717, C711–C722, C724–C733, C738–C748, C742–C757, and C759–C768. Residues N878 and N1057 are each glycosylated (N-linked (GlcNAc...) asparagine). 5 NHL repeats span residues 1167–1192, 1202–1246, 1272–1316, 1331–1382, and 1461–1504; these read LFAP…VRRI, LELR…AKSL, SHCG…NGMI, LSCD…IAGR, and CFSG…VSRN. The stretch at 1514–1533 is one YD 1 repeat; sequence YEIASPADQELYQFTINGTH. 2 N-linked (GlcNAc...) asparagine glycosylation sites follow: N1530 and N1547. YD repeat units follow at residues 1550–1570, 1588–1612, 1613–1634, and 1635–1655; these read YSGE…VHIR, YWLT…ALMT, YPGN…TVYE, and YDSD…SSFH. 5 N-linked (GlcNAc...) asparagine glycosylation sites follow: N1643, N1679, N1737, N1761, and N1822. YD repeat units follow at residues 1825–1844, 1845–1865, 1866–1884, 1885–1905, 1913–1929, 1930–1949, 1950–1969, 1972–1992, 1995–2015, 2065–2085, and 2093–2113; these read YSHS…EKME, YDPS…WSYT, YLEK…YIFE, YDQS…HALQ, YRNI…FIQD, VTRD…RRVL, YKYS…TQVT, YEES…FICT, YRQT…EGLV, YDLN…FSAN, and YEIL…MGRM. The N-linked (GlcNAc...) asparagine glycan is linked to N2125. YD repeat units follow at residues 2133 to 2153, 2154 to 2174, 2176 to 2196, 2208 to 2228, and 2230 to 2250; these read YDRD…WRYS, YDLN…LTPL, YDLR…DEDG, YNSN…TVQY, and YDGL…LQFF. N-linked (GlcNAc...) asparagine glycosylation occurs at N2265. YD repeat units lie at residues 2276–2293 and 2294–2317; these read YDLQ…GEEY and YVAC…IKEI. A glycan (N-linked (GlcNAc...) asparagine) is linked at N2582.

It belongs to the tenascin family. Teneurin subfamily. Homodimer; disulfide-linked. Heterodimer with other teneurins. Ten-1 ICD interacts with SORBS1 (via third SH3 domain). Interacts with MBD1 isoform 2. In terms of processing, derives from the plasma membrane form by proteolytic processing. Further proteolytic cleavage may be generated. Derives from the plasma membrane form by proteolytic cleavage and translocates to the nucleus. In terms of tissue distribution, expressed in the neurons of the developing visual system and in fetal brain.

The protein localises to the cell membrane. It is found in the nucleus. The protein resides in the nucleus speckle. Its subcellular location is the nucleus matrix. It localises to the cytoplasm. The protein localises to the cytoskeleton. Involved in neural development, regulating the establishment of proper connectivity within the nervous system. May function as a cellular signal transducer. Functionally, plays a role in the regulation of neuroplasticity in the limbic system. Mediates a rapid reorganization of actin- and tubulin-based cytoskeleton elements with an increase in dendritic arborization and spine density formation of neurons in the hippocampus and amygdala. Induces BDNF transcription inhibition in neurons. Activates the mitogen-activated protein (MAP) kinase 2 (MEK2) and extracellular signal-regulated kinase (ERK) cascade. Its function is as follows. Induces gene transcription activation. In Gallus gallus (Chicken), this protein is Teneurin-1 (TENM1).